A 107-amino-acid polypeptide reads, in one-letter code: UPF0145 protein ETA_21660 (107 aa).

This sequence belongs to the UPF0145 family.

This is UPF0145 protein ETA_21660 from Erwinia tasmaniensis (strain DSM 17950 / CFBP 7177 / CIP 109463 / NCPPB 4357 / Et1/99).